A 265-amino-acid chain; its full sequence is MAGNFWQSSHHQQWILDKQDLIRERQHDLKNLTEEEYQKIFMFFANVIQVLGEQLKLRQQVIATATVYFKRFYARNSLKCIDPLLLAPTCILLASKVEEFGVISNSRLITTCQTVIKNKFSYAYQQEFPYRTNHILECEFYLLENLDCCLIVYQPYRPLLQLIQDIGQEDQLLTLTWRLINDSLRTDVSLLYPPYQIAIGCLQIACVILQKELKAWFAELNVDMEKVQEIARAILNVFELWKSYDEKEIQGLLEKMPKPKPAPQR.

Positions 48–151 constitute a Cyclin N-terminal domain; that stretch reads IQVLGEQLKL…LLENLDCCLI (104 aa).

Belongs to the cyclin family. Cyclin C subfamily. As to quaternary structure, component of the Cdk8 module of the Mediator complex.

Its subcellular location is the nucleus. In terms of biological role, component of the Mediator complex, a coactivator involved in regulated gene transcription of nearly all RNA polymerase II-dependent genes. Mediator functions as a bridge to convey information from gene-specific regulatory proteins to the basal RNA polymerase II transcription machinery. Mediator is recruited to promoters by direct interactions with regulatory proteins and serves as a scaffold for the assembly of a functional preinitiation complex with RNA polymerase II and the general transcription factors. Binds to and activates cyclin-dependent kinase Cdk8 that phosphorylates the CTD (C-terminal domain) of the large subunit of RNA polymerase II (RNAp II), which may inhibit the formation of a transcription initiation complex. The sequence is that of Cyclin-C (CycC) from Aedes aegypti (Yellowfever mosquito).